We begin with the raw amino-acid sequence, 175 residues long: Phosphopantetheine adenylyltransferase (175 aa).

Ser10 provides a ligand contact to substrate. ATP-binding positions include 10–11 (SF) and His18. The substrate site is built by Lys42, Leu74, and Arg88. Residues 89 to 91 (GMR), Glu99, and 124 to 130 (WIFTSSS) each bind ATP.

This sequence belongs to the bacterial CoaD family. Homohexamer. Mg(2+) is required as a cofactor.

It localises to the cytoplasm. The enzyme catalyses (R)-4'-phosphopantetheine + ATP + H(+) = 3'-dephospho-CoA + diphosphate. Its pathway is cofactor biosynthesis; coenzyme A biosynthesis; CoA from (R)-pantothenate: step 4/5. Reversibly transfers an adenylyl group from ATP to 4'-phosphopantetheine, yielding dephospho-CoA (dPCoA) and pyrophosphate. This Desulfatibacillum aliphaticivorans protein is Phosphopantetheine adenylyltransferase.